The sequence spans 253 residues: MNQVDLNCDLGESFGAYKIGLDEEILEFVTSANIACGFHAGDPGVMRKTVKMAAEKGVKIGAHPGLPDLAGFGRRNMAITPEEAYDLVVYQIGALSGFLKAEGVTMQHVKPHGALYNMAAQSRELSDAIARAVYQTDPELILFGLAGSELVLAGERAGLKTAHEVFADRTYQEDGTLTSRRQNDALIQDDDEAVGQVIRMVKEGKVRSLQGTDVSLKADTVCIHGDGAHALHFAKKIRRELRAADIKVQAFST.

This sequence belongs to the LamB/PxpA family. Forms a complex composed of PxpA, PxpB and PxpC.

The enzyme catalyses 5-oxo-L-proline + ATP + 2 H2O = L-glutamate + ADP + phosphate + H(+). Its function is as follows. Catalyzes the cleavage of 5-oxoproline to form L-glutamate coupled to the hydrolysis of ATP to ADP and inorganic phosphate. In Bacillus licheniformis (strain ATCC 14580 / DSM 13 / JCM 2505 / CCUG 7422 / NBRC 12200 / NCIMB 9375 / NCTC 10341 / NRRL NRS-1264 / Gibson 46), this protein is 5-oxoprolinase subunit A.